Reading from the N-terminus, the 446-residue chain is Glucarate dehydratase-related protein (446 aa).

Residues histidine 31, threonine 104, tyrosine 149, and lysine 204 each coordinate substrate. The active-site Proton acceptor is lysine 206. Mg(2+) is bound by residues aspartate 234, glutamate 265, and asparagine 288. Position 234-236 (234-236 (DPN)) interacts with substrate. Residues asparagine 288, 338 to 340 (HSN), histidine 367, and arginine 421 contribute to the substrate site. Catalysis depends on histidine 338, which acts as the Proton acceptor.

It belongs to the mandelate racemase/muconate lactonizing enzyme family. GlucD subfamily. It depends on a divalent metal cation as a cofactor.

Functionally, does not seem to have an in-vivo activity on glucarate or idarate. Its real substrate is unknown. The sequence is that of Glucarate dehydratase-related protein (gudX) from Escherichia coli (strain K12).